A 303-amino-acid chain; its full sequence is Probable 5-dehydro-4-deoxyglucarate dehydratase (303 aa).

This sequence belongs to the DapA family.

The enzyme catalyses 5-dehydro-4-deoxy-D-glucarate + H(+) = 2,5-dioxopentanoate + CO2 + H2O. Its pathway is carbohydrate acid metabolism; D-glucarate degradation; 2,5-dioxopentanoate from D-glucarate: step 2/2. The chain is Probable 5-dehydro-4-deoxyglucarate dehydratase from Pseudomonas syringae pv. tomato (strain ATCC BAA-871 / DC3000).